A 302-amino-acid polypeptide reads, in one-letter code: MSVSRLAASGLLLVSLLALALDGKPVEKWSPWLWPPRPRPPIPPLQQQKWLDPPIPQQQKWLDPPIPQQQKWLDPPIPQQQKWLNPPIPQQQKWLDPPIPQQQKWLNPPIPQQQKWLNPPIPQQQKWLNPPIPQQQKWLNPPIPQQQKWLDPPIPQQQKWLDPPIPQQQKWLDPPIPQQQKWLNPPIPQQQKWLDPPIPQQQKWLDPPIPQQQKWLNPPIPQQQKWQRPLQPEVPSLMELHQERQKQGRMMHHDEDPGDAAEGPRRQKKEPGKPEGNGCFGKKIDRINAGFGCPKLPPSGGH.

The first 23 residues, 1–23 (MSVSRLAASGLLLVSLLALALDG), serve as a signal peptide directing secretion. A propeptide spanning residues 24 to 47 (KPVEKWSPWLWPPRPRPPIPPLQQ) is cleaved from the precursor. The segment at 32–302 (WLWPPRPRPP…CPKLPPSGGH (271 aa)) is disordered. Positions 33–44 (LWPPRPRPPIPP) are enriched in pro residues. Gln48 carries the post-translational modification Pyrrolidone carboxylic acid. The propeptide occupies 51-58 (LDPPIPQQ). Pyrrolidone carboxylic acid is present on Gln59. Residues 62–69 (LDPPIPQQ) constitute a propeptide that is removed on maturation. Gln70 carries the pyrrolidone carboxylic acid modification. The propeptide occupies 73-80 (LDPPIPQQ). Position 81 is a pyrrolidone carboxylic acid (Gln81). A propeptide spanning residues 84 to 91 (LNPPIPQQ) is cleaved from the precursor. Gln92 is subject to Pyrrolidone carboxylic acid. Residues 95–102 (LDPPIPQQ) constitute a propeptide that is removed on maturation. A Pyrrolidone carboxylic acid modification is found at Gln103. Residues 106-113 (LNPPIPQQ) constitute a propeptide that is removed on maturation. Position 114 is a pyrrolidone carboxylic acid (Gln114). The propeptide occupies 117-124 (LNPPIPQQ). At Gln125 the chain carries Pyrrolidone carboxylic acid. The propeptide occupies 128 to 135 (LNPPIPQQ). The residue at position 136 (Gln136) is a Pyrrolidone carboxylic acid. A propeptide spanning residues 139 to 146 (LNPPIPQQ) is cleaved from the precursor. Gln147 carries the post-translational modification Pyrrolidone carboxylic acid. Residues 150–157 (LDPPIPQQ) constitute a propeptide that is removed on maturation. Residue Gln158 is modified to Pyrrolidone carboxylic acid. Positions 161-168 (LDPPIPQQ) are excised as a propeptide. Residue Gln169 is modified to Pyrrolidone carboxylic acid. Positions 172–179 (LDPPIPQQ) are excised as a propeptide. Gln180 carries the pyrrolidone carboxylic acid modification. A propeptide spanning residues 183–190 (LNPPIPQQ) is cleaved from the precursor. Position 191 is a pyrrolidone carboxylic acid (Gln191). A propeptide spanning residues 194-201 (LDPPIPQQ) is cleaved from the precursor. At Gln202 the chain carries Pyrrolidone carboxylic acid. Residues 205 to 212 (LDPPIPQQ) constitute a propeptide that is removed on maturation. Gln213 carries the pyrrolidone carboxylic acid modification. Positions 216-223 (LNPPIPQQ) are excised as a propeptide. Gln224 carries the pyrrolidone carboxylic acid modification. Positions 227 to 273 (QRPLQPEVPSLMELHQERQKQGRMMHHDEDPGDAAEGPRRQKKEPGK) are excised as a propeptide. Composition is skewed to basic and acidic residues over residues 240–255 (LHQE…HHDE) and 262–273 (EGPRRQKKEPGK). Cys279 and Cys293 are oxidised to a cystine. The propeptide occupies 294–302 (PKLPPSGGH).

This sequence in the C-terminal section; belongs to the natriuretic peptide family. In terms of tissue distribution, expressed by the venom gland.

The protein resides in the secreted. In terms of biological role, pEKW peptides may serve as metalloproteinase inhibitors during glandular storage. Their inhibition may be instantly disengaged, by dilution or physiochemical change, when venom is injected into tissue of the victim. Functionally, exhibits hypotensive and vasodepressor activity. Acts by activating natriuretic receptors (NPR1 and/or NPR2 and/or NPR3). The protein is Snake venom metalloprotease inhibitor 02A10 (Svmpi-Cce12) of Cerastes cerastes (Horned desert viper).